The chain runs to 433 residues: Glutamate--tRNA ligase 1 (433 aa).

Positions 7 to 17 match the 'HIGH' region motif; it reads PSPTGLIHLGN. The 'KMSKS' region motif lies at 230-234; sequence KMSKR. Lys233 is an ATP binding site.

Belongs to the class-I aminoacyl-tRNA synthetase family. Glutamate--tRNA ligase type 1 subfamily. As to quaternary structure, monomer.

It is found in the cytoplasm. It catalyses the reaction tRNA(Glu) + L-glutamate + ATP = L-glutamyl-tRNA(Glu) + AMP + diphosphate. Functionally, catalyzes the attachment of glutamate to tRNA(Glu) in a two-step reaction: glutamate is first activated by ATP to form Glu-AMP and then transferred to the acceptor end of tRNA(Glu). The polypeptide is Glutamate--tRNA ligase 1 (Neorickettsia sennetsu (strain ATCC VR-367 / Miyayama) (Ehrlichia sennetsu)).